We begin with the raw amino-acid sequence, 1336 residues long: Coiled-coil and C2 domain-containing protein 2A (1336 aa).

2 disordered regions span residues 1 to 29 (MEAALSRKTAKKKRKTHTTRGYRKREQEV) and 70 to 97 (VEDCQESDEDSGGELAEEPTDSPSQTFI). Residues 8–23 (KTAKKKRKTHTTRGYR) show a composition bias toward basic residues. The segment covering 70-89 (VEDCQESDEDSGGELAEEPT) has biased composition (acidic residues). Residues 136 to 156 (LSDLSELKDSQIRMLNRYQEQ) are a coiled coil. The region spanning 755-915 (PREPSGWSGH…LASRTFEGCI (161 aa)) is the C2 domain.

Probable component of the tectonic-like complex (also named MKS complex), composed of B9d1, B9d2, Cc2d2a, Mks1 and tctn. In terms of tissue distribution, expressed in the antennae of chordotonal neurons and male germ cells (at protein level).

Its subcellular location is the cytoplasm. The protein resides in the cytoskeleton. It localises to the cilium basal body. The protein localises to the microtubule organizing center. It is found in the centrosome. Its subcellular location is the centriole. Its function is as follows. Probable component of the tectonic-like complex (also named MKS complex), a complex localized at the transition zone of primary cilia. Required for ciliary structure and function. The polypeptide is Coiled-coil and C2 domain-containing protein 2A (Drosophila melanogaster (Fruit fly)).